A 671-amino-acid polypeptide reads, in one-letter code: DNA ligase (671 aa).

NAD(+) contacts are provided by residues 32-36 (DAEYD), 81-82 (SL), and Glu113. Residue Lys115 is the N6-AMP-lysine intermediate of the active site. 4 residues coordinate NAD(+): Arg136, Glu173, Lys290, and Lys314. 4 residues coordinate Zn(2+): Cys408, Cys411, Cys426, and Cys432. The region spanning 593 to 671 (EIDSPFAGKT…EAEMIRLLGA (79 aa)) is the BRCT domain.

Belongs to the NAD-dependent DNA ligase family. LigA subfamily. The cofactor is Mg(2+). Requires Mn(2+) as cofactor.

It catalyses the reaction NAD(+) + (deoxyribonucleotide)n-3'-hydroxyl + 5'-phospho-(deoxyribonucleotide)m = (deoxyribonucleotide)n+m + AMP + beta-nicotinamide D-nucleotide.. Its function is as follows. DNA ligase that catalyzes the formation of phosphodiester linkages between 5'-phosphoryl and 3'-hydroxyl groups in double-stranded DNA using NAD as a coenzyme and as the energy source for the reaction. It is essential for DNA replication and repair of damaged DNA. The sequence is that of DNA ligase from Salmonella typhimurium (strain LT2 / SGSC1412 / ATCC 700720).